Here is a 565-residue protein sequence, read N- to C-terminus: Protein priB (565 aa).

A DNA-binding region (zn(2)-C6 fungal-type) is located at residues 20–50; the sequence is CTTCRAAKMKCVGAEDGQRQCQRCKRANVQC. 2 disordered regions span residues 82–170 and 195–224; these read AKSK…SDRA and NPED…APAG. The segment covering 90 to 111 has biased composition (basic and acidic residues); that stretch reads DARHSSSYRDSHPSLGEPDDRY. Residues 129–155 show a composition bias toward low complexity; the sequence is SNLPPLNLPSYPDAASEYTASSTSSRT. Positions 203 to 215 are enriched in polar residues; it reads GPSSVRCSETYSP.

Its subcellular location is the nucleus. The polypeptide is Protein priB (priB) (Lentinula edodes (Shiitake mushroom)).